The primary structure comprises 203 residues: tRNA (cytidine(56)-2'-O)-methyltransferase (203 aa).

Residues Leu80, 109-113 (GAEKV), and 127-134 (IGNQPHSE) contribute to the S-adenosyl-L-methionine site. A disordered region spans residues 178–203 (AEQDKAEGKATPGKNWENSGFTGDNP). Residues 193–203 (WENSGFTGDNP) show a composition bias toward polar residues.

The protein belongs to the aTrm56 family. In terms of assembly, homodimer.

It localises to the cytoplasm. The catalysed reaction is cytidine(56) in tRNA + S-adenosyl-L-methionine = 2'-O-methylcytidine(56) in tRNA + S-adenosyl-L-homocysteine + H(+). Functionally, specifically catalyzes the AdoMet-dependent 2'-O-ribose methylation of cytidine at position 56 in tRNAs. The chain is tRNA (cytidine(56)-2'-O)-methyltransferase from Pyrococcus horikoshii (strain ATCC 700860 / DSM 12428 / JCM 9974 / NBRC 100139 / OT-3).